Consider the following 314-residue polypeptide: Ecto-ADP-ribosyltransferase 4 (314 aa).

Positions 1–46 are cleaved as a signal peptide; that stretch reads MGPLINRCKKILLPTTVPPATMRIWLLGGPLPFLLLLSGLQRPTEG. 2 disulfide bridges follow: Cys-69/Cys-280 and Cys-182/Cys-231. The TR mART core domain maps to 91 to 276; that stretch reads KNYFRMWQKA…LQLRSTGNLS (186 aa). An N-linked (GlcNAc...) asparagine glycan is attached at Asn-114. Position 126 (Tyr-126) interacts with NAD(+). N-linked (GlcNAc...) asparagine glycosylation occurs at Asn-178. Gln-206 provides a ligand contact to NAD(+). Residue Asn-222 is glycosylated (N-linked (GlcNAc...) asparagine). Residue Ser-240 coordinates NAD(+). Asn-257 and Asn-274 each carry an N-linked (GlcNAc...) asparagine glycan. Ala-285 is lipidated: GPI-anchor amidated alanine. A propeptide spans 286 to 314 (removed in mature form); it reads SSKKCIPDPIAIASLSFLTSVIIFSKSRV.

The protein belongs to the Arg-specific ADP-ribosyltransferase family.

It localises to the cell membrane. It carries out the reaction L-arginyl-[protein] + NAD(+) = N(omega)-(ADP-D-ribosyl)-L-arginyl-[protein] + nicotinamide + H(+). The polypeptide is Ecto-ADP-ribosyltransferase 4 (ART4) (Pan troglodytes (Chimpanzee)).